The sequence spans 427 residues: Putative transporter YdfJ (427 aa).

At 1–7 (MDFQLYS) the chain is on the cytoplasmic side. A run of 2 helical transmembrane segments spans residues 8-28 (LGAA…AMAL) and 29-49 (ILAM…AFIF). Topologically, residues 50 to 74 (GKMGDRIGRKKVLFITITMMGICTT) are cytoplasmic. Residues 75 to 95 (LIGVLPTYAQIGVFAPILLVT) traverse the membrane as a helical segment. The Periplasmic portion of the chain corresponds to 96–97 (LR). A helical transmembrane segment spans residues 98-118 (IIQGLGAGAEISGAGTMLAEY). Residues 119–132 (APKGKRGIISSFVA) lie on the Cytoplasmic side of the membrane. A helical membrane pass occupies residues 133–153 (MGTNCGTLSATAIWAFMFFIL). At 154-157 (SKEE) the chain is on the periplasmic side. A helical transmembrane segment spans residues 158 to 178 (LLAWGWRIPFLASVVVMVFAI). Residues 179 to 225 (WLRMNLKESPVFEKVNDSNQPTAKPAPAGSMFQSKSFWLATGLRFGQ) lie on the Cytoplasmic side of the membrane. Residues 226–246 (AGNSGLIQTFLAGYLVQTLLF) form a helical membrane-spanning segment. At 247–251 (NKAIP) the chain is on the periplasmic side. A helical membrane pass occupies residues 252–272 (TDALMISSILGFMTIPFLGWL). The Cytoplasmic segment spans residues 273 to 279 (SDKIGRR). The helical transmembrane segment at 280 to 300 (IPYIIMNTSAIVLAWPMLSII) threads the bilayer. The Periplasmic segment spans residues 301 to 307 (VDKSYAP). The helical transmembrane segment at 308-328 (STIMVALIVIHNCAVLGLFAL) threads the bilayer. The Cytoplasmic portion of the chain corresponds to 329 to 351 (ENITMAEMFGCKNRFTRMAISKE). A helical transmembrane segment spans residues 352–372 (IGGLIASGFGPILAGIFCTMT). Residue glutamate 373 is a topological domain, periplasmic. Residues 374 to 394 (SWYPIAIMIMAYSVIGLISAL) traverse the membrane as a helical segment. The Cytoplasmic portion of the chain corresponds to 395–427 (KMPEVKDRDLSALEDAAEDQPRVVRAAQPSRSL).

Belongs to the major facilitator superfamily. Metabolite:H+ Symporter (MHS) family (TC 2.A.1.6) family.

It localises to the cell inner membrane. Functionally, when overexpressed in human HEK-293 cells forms an inward rectifying potassium channel. The sequence is that of Putative transporter YdfJ (ydfJ) from Escherichia coli (strain K12).